We begin with the raw amino-acid sequence, 200 residues long: 3-isopropylmalate dehydratase small subunit (200 aa).

It belongs to the LeuD family. LeuD type 1 subfamily. In terms of assembly, heterodimer of LeuC and LeuD.

It carries out the reaction (2R,3S)-3-isopropylmalate = (2S)-2-isopropylmalate. Its pathway is amino-acid biosynthesis; L-leucine biosynthesis; L-leucine from 3-methyl-2-oxobutanoate: step 2/4. In terms of biological role, catalyzes the isomerization between 2-isopropylmalate and 3-isopropylmalate, via the formation of 2-isopropylmaleate. This Serratia proteamaculans (strain 568) protein is 3-isopropylmalate dehydratase small subunit.